The following is a 122-amino-acid chain: Large ribosomal subunit protein bL12 (122 aa).

Belongs to the bacterial ribosomal protein bL12 family. Homodimer. Part of the ribosomal stalk of the 50S ribosomal subunit. Forms a multimeric L10(L12)X complex, where L10 forms an elongated spine to which 2 to 4 L12 dimers bind in a sequential fashion. Binds GTP-bound translation factors.

Forms part of the ribosomal stalk which helps the ribosome interact with GTP-bound translation factors. Is thus essential for accurate translation. The chain is Large ribosomal subunit protein bL12 from Levilactobacillus brevis (strain ATCC 367 / BCRC 12310 / CIP 105137 / JCM 1170 / LMG 11437 / NCIMB 947 / NCTC 947) (Lactobacillus brevis).